The primary structure comprises 390 residues: Probable splicing factor YJU2B (390 aa).

Residues 354 to 390 are disordered; the sequence is DACKASSSSEEENSIDSCATGKSLVADYSDSDSGSEV.

Belongs to the CWC16 family.

The protein localises to the nucleus. Functionally, may be involved in mRNA splicing. This Danio rerio (Zebrafish) protein is Probable splicing factor YJU2B (yju2b).